We begin with the raw amino-acid sequence, 470 residues long: Putative F-box/LRR-repeat protein At3g58920 (470 aa).

In terms of domain architecture, F-box spans 1–53 (MDRISNLPNEIICHIVSFLSAKEAAFASVLSKRWQNLFTIVQKLEFDDSVKNQ). 6 LRR repeats span residues 114-142 (KLEI…KLTS), 143-170 (CIFA…FLKS), 173-198 (FSDL…TIYD), 225-250 (FTYF…KYID), 287-312 (EDDP…HLST), and 342-367 (YECF…MIKG).

This chain is Putative F-box/LRR-repeat protein At3g58920, found in Arabidopsis thaliana (Mouse-ear cress).